The following is a 249-amino-acid chain: Phosphoribosylaminoimidazole-succinocarboxamide synthase (249 aa).

Belongs to the SAICAR synthetase family.

The catalysed reaction is 5-amino-1-(5-phospho-D-ribosyl)imidazole-4-carboxylate + L-aspartate + ATP = (2S)-2-[5-amino-1-(5-phospho-beta-D-ribosyl)imidazole-4-carboxamido]succinate + ADP + phosphate + 2 H(+). The protein operates within purine metabolism; IMP biosynthesis via de novo pathway; 5-amino-1-(5-phospho-D-ribosyl)imidazole-4-carboxamide from 5-amino-1-(5-phospho-D-ribosyl)imidazole-4-carboxylate: step 1/2. The chain is Phosphoribosylaminoimidazole-succinocarboxamide synthase from Chloroflexus aurantiacus (strain ATCC 29366 / DSM 635 / J-10-fl).